A 486-amino-acid polypeptide reads, in one-letter code: uncharacterized protein (486 aa).

ABC transporter domains follow at residues V2–V241 and F249–L486. G36–S43 contacts ATP.

This sequence belongs to the ABC transporter superfamily.

This is an uncharacterized protein from Borreliella burgdorferi (strain ATCC 35210 / DSM 4680 / CIP 102532 / B31) (Borrelia burgdorferi).